Consider the following 90-residue polypeptide: Small ribosomal subunit protein bS18 (90 aa).

This sequence belongs to the bacterial ribosomal protein bS18 family. Part of the 30S ribosomal subunit. Forms a tight heterodimer with protein bS6.

In terms of biological role, binds as a heterodimer with protein bS6 to the central domain of the 16S rRNA, where it helps stabilize the platform of the 30S subunit. In Bordetella bronchiseptica (strain ATCC BAA-588 / NCTC 13252 / RB50) (Alcaligenes bronchisepticus), this protein is Small ribosomal subunit protein bS18.